Reading from the N-terminus, the 659-residue chain is Putative cysteine-rich receptor-like protein kinase 39 (659 aa).

The signal sequence occupies residues 1–27 (MGKYSVLMIFIASSLLIVLQNVEIVNA). Gnk2-homologous domains are found at residues 28–134 (VGCT…NHST) and 142–253 (PSVR…LYAF). The Extracellular portion of the chain corresponds to 28–289 (VGCTGSFFNG…KKKGRSIGYG (262 aa)). N-linked (GlcNAc...) asparagine glycosylation is found at asparagine 38, asparagine 64, asparagine 122, asparagine 131, asparagine 157, asparagine 170, asparagine 259, and asparagine 274. The helical transmembrane segment at 290–310 (GIIAIVVVLTFINILVFIGYI) threads the bilayer. The Cytoplasmic portion of the chain corresponds to 311-659 (KVYGRRKESY…DDVFTELSCR (349 aa)). The region spanning 353 to 619 (FSSENTLGQG…PTMSSVIIWL (267 aa)) is the Protein kinase domain. ATP-binding positions include 359–367 (LGQGGFGTV) and lysine 381. A Phosphotyrosine modification is found at tyrosine 426. Aspartate 478 serves as the catalytic Proton acceptor. A Phosphoserine modification is found at serine 482. Phosphothreonine is present on threonine 518. The residue at position 526 (tyrosine 526) is a Phosphotyrosine.

It belongs to the protein kinase superfamily. Ser/Thr protein kinase family. CRK subfamily.

It localises to the membrane. It carries out the reaction L-seryl-[protein] + ATP = O-phospho-L-seryl-[protein] + ADP + H(+). It catalyses the reaction L-threonyl-[protein] + ATP = O-phospho-L-threonyl-[protein] + ADP + H(+). This Arabidopsis thaliana (Mouse-ear cress) protein is Putative cysteine-rich receptor-like protein kinase 39 (CRK39).